A 294-amino-acid polypeptide reads, in one-letter code: Elongation factor Ts (294 aa).

The tract at residues 79-82 (TDFV) is involved in Mg(2+) ion dislocation from EF-Tu.

This sequence belongs to the EF-Ts family.

It is found in the cytoplasm. Associates with the EF-Tu.GDP complex and induces the exchange of GDP to GTP. It remains bound to the aminoacyl-tRNA.EF-Tu.GTP complex up to the GTP hydrolysis stage on the ribosome. The polypeptide is Elongation factor Ts (Oceanobacillus iheyensis (strain DSM 14371 / CIP 107618 / JCM 11309 / KCTC 3954 / HTE831)).